The primary structure comprises 445 residues: tRNA-2-methylthio-N(6)-dimethylallyladenosine synthase (445 aa).

The MTTase N-terminal domain maps to 4-121 (NKIYIKTWGC…LPNMIQEVKK (118 aa)). The [4Fe-4S] cluster site is built by cysteine 13, cysteine 50, cysteine 84, cysteine 158, cysteine 162, and cysteine 165. The region spanning 144–376 (RKPKVTAFVS…QTLIRNNTTM (233 aa)) is the Radical SAM core domain. The TRAM domain occupies 379–442 (QKMLGSIQSV…PNSLRGSYEK (64 aa)).

It belongs to the methylthiotransferase family. MiaB subfamily. Monomer. [4Fe-4S] cluster serves as cofactor.

The protein resides in the cytoplasm. It carries out the reaction N(6)-dimethylallyladenosine(37) in tRNA + (sulfur carrier)-SH + AH2 + 2 S-adenosyl-L-methionine = 2-methylsulfanyl-N(6)-dimethylallyladenosine(37) in tRNA + (sulfur carrier)-H + 5'-deoxyadenosine + L-methionine + A + S-adenosyl-L-homocysteine + 2 H(+). In terms of biological role, catalyzes the methylthiolation of N6-(dimethylallyl)adenosine (i(6)A), leading to the formation of 2-methylthio-N6-(dimethylallyl)adenosine (ms(2)i(6)A) at position 37 in tRNAs that read codons beginning with uridine. The polypeptide is tRNA-2-methylthio-N(6)-dimethylallyladenosine synthase (Buchnera aphidicola subsp. Baizongia pistaciae (strain Bp)).